The chain runs to 329 residues: tRNA-modifying protein YgfZ (329 aa).

Folate is bound by residues Trp28 and Trp188.

The protein belongs to the tRNA-modifying YgfZ family.

It localises to the cytoplasm. In terms of biological role, folate-binding protein involved in regulating the level of ATP-DnaA and in the modification of some tRNAs. It is probably a key factor in regulatory networks that act via tRNA modification, such as initiation of chromosomal replication. In Photorhabdus laumondii subsp. laumondii (strain DSM 15139 / CIP 105565 / TT01) (Photorhabdus luminescens subsp. laumondii), this protein is tRNA-modifying protein YgfZ.